Consider the following 227-residue polypeptide: MGDAGSERSKAPSLPPRCPCGFWGSSKTMNLCSKCFADFQKKQPDDDSTPSTSNSQSDLFSEETTSDNNNTSVTTPTLSPSQQSLPTELNVTSPSEEECGPCTDTAHVSLITPTKRSCGADSQSESEASPVKRPRLVENPERPEESGRSKQKSRRRCFQCQTKLELVQQELGSCRCGYVFCMLHRLPEQHDCTFDHMGRGREEAIMKMVKLDRKVGRSCQRIGEGCS.

The A20-type zinc finger occupies 12–44 (PSLPPRCPCGFWGSSKTMNLCSKCFADFQKKQP). Zn(2+)-binding residues include Cys-18, Cys-20, Cys-32, and Cys-35. Residues 41–151 (KKQPDDDSTP…RPEESGRSKQ (111 aa)) form a disordered region. Composition is skewed to low complexity over residues 49-59 (TPSTSNSQSDL) and 66-77 (SDNNNTSVTTPT). Polar residues-rich tracts occupy residues 78-94 (LSPSQQSLPTELNVTSP) and 111-127 (ITPTKRSCGADSQSESE). Residues 135–148 (RLVENPERPEESGR) show a composition bias toward basic and acidic residues. An AN1-type zinc finger spans residues 151–200 (QKSRRRCFQCQTKLELVQQELGSCRCGYVFCMLHRLPEQHDCTFDHMGRG). The Zn(2+) site is built by Cys-157, Cys-160, Cys-174, Cys-176, Cys-181, His-184, His-190, and Cys-192.

This chain is AN1-type zinc finger protein 3 (Zfand3), found in Rattus norvegicus (Rat).